A 104-amino-acid chain; its full sequence is Protamine-2 (104 aa).

Phosphoserine is present on residues Ser8 and Ser10. Residues 23-104 (WQEQGRNGQE…SRRRRRCRRY (82 aa)) form a disordered region. A compositionally biased stretch (low complexity) spans 24–35 (QEQGRNGQEEQG). The residue at position 37 (Ser37) is a Phosphoserine. Over residues 54-104 (YRRRRCSRRRRYRIHRRRSRSCRRRRRRSCRYRRRPRRGCRSRRRRRCRRY) the composition is skewed to basic residues.

Belongs to the protamine P2 family. In terms of assembly, interacts with TDRP. Proteolytic processing into mature chains is required for histone eviction during spermatogenesis. Transition proteins (TNP1 and TNP2) are required for processing. In terms of tissue distribution, testis.

It is found in the nucleus. It localises to the chromosome. Its function is as follows. Protamines substitute for histones in the chromatin of sperm during the haploid phase of spermatogenesis. They compact sperm DNA into a highly condensed, stable and inactive complex. This Callithrix jacchus (White-tufted-ear marmoset) protein is Protamine-2 (PRM2).